Consider the following 78-residue polypeptide: Mambalgin-1 (78 aa).

The signal sequence occupies residues 1-21 (MKTLLLTLLVVTIVCLDLGYS). Cystine bridges form between Cys-24-Cys-40, Cys-33-Cys-58, Cys-62-Cys-70, and Cys-71-Cys-76.

The protein belongs to the three-finger toxin family. Short-chain subfamily. Mambalgin sub-subfamily. In terms of tissue distribution, expressed by the venom gland.

Its subcellular location is the secreted. Its function is as follows. This three-finger toxin inhibits ASIC channels. It acts as a gating modifier toxin by decreasing the apparent proton sensitivity of activation and by slightly increasing the apparent proton sensitivity for inactivation. It binds more tightly to the closed state and to a much lesser extent the inactivated/desensitized state of ASIC1a isoform of ASIC1. It interacts directly with the outside surface of the thumb domain of chicken ASIC1a (ASIC1a), but does not insert into the acidic pocket as suggested for mambalgin-2. This binding leads to relocation of the thumb domain that could disrupt the acidic pocket of cASIC1a. It reversibly inhibits rat ASIC1a (IC(50)=3.4-55 nM), rat ASIC1a-ASIC2b (IC(50)=61 nM), rat ASIC1a-ASIC1b (IC(50)=72 nM), human ASIC1a (IC(50)=127-580 nM), chicken ASIC1a (IC(50)=123.6 nM), rat ASIC1b (IC(50)=22.2-203 nM), rat ASIC1a-ASIC2a (IC(50)=152-252 nM). In vivo, it shows a potent naloxone-resistant analgesic effect against acute and inflammatory pain upon central and peripheral injection. In addition, it also has an opioid-independent effect on both thermal and mechanical inflammatory pain after systemic administration and is effective against neuropathic pain. The polypeptide is Mambalgin-1 (Dendroaspis polylepis polylepis (Black mamba)).